We begin with the raw amino-acid sequence, 145 residues long: D-aminoacyl-tRNA deacylase (145 aa).

A Gly-cisPro motif, important for rejection of L-amino acids motif is present at residues 137–138; sequence GP.

The protein belongs to the DTD family. As to quaternary structure, homodimer.

It localises to the cytoplasm. It catalyses the reaction glycyl-tRNA(Ala) + H2O = tRNA(Ala) + glycine + H(+). The enzyme catalyses a D-aminoacyl-tRNA + H2O = a tRNA + a D-alpha-amino acid + H(+). An aminoacyl-tRNA editing enzyme that deacylates mischarged D-aminoacyl-tRNAs. Also deacylates mischarged glycyl-tRNA(Ala), protecting cells against glycine mischarging by AlaRS. Acts via tRNA-based rather than protein-based catalysis; rejects L-amino acids rather than detecting D-amino acids in the active site. By recycling D-aminoacyl-tRNA to D-amino acids and free tRNA molecules, this enzyme counteracts the toxicity associated with the formation of D-aminoacyl-tRNA entities in vivo and helps enforce protein L-homochirality. The chain is D-aminoacyl-tRNA deacylase from Pectobacterium atrosepticum (strain SCRI 1043 / ATCC BAA-672) (Erwinia carotovora subsp. atroseptica).